A 359-amino-acid chain; its full sequence is 3-dehydroshikimate dehydratase (359 aa).

The protein belongs to the bacterial two-domain DSD family. As to quaternary structure, monomer.

The catalysed reaction is 3-dehydroshikimate = 3,4-dihydroxybenzoate + H2O. The protein operates within aromatic compound metabolism; 3,4-dihydroxybenzoate biosynthesis; 3,4-dihydroxybenzoate from 3-dehydroquinate: step 2/2. With respect to regulation, divalent cations such as Mg(2+), but also MO(2+), Mn(2+), Ba(2+), and Co(2+) activate the enzyme, whereas monovalent cations as K(+), Na(+), and NH4(+) decrease its activity slightly. Its function is as follows. 3-dehydroshikimate dehydratase; part of the qa gene cluster that mediates the catabolism of quinic acid (QA) and as such, allows the use of QA as a sole carbon source. Catalyzes the third reaction in the inducible quinic acid catabolic pathway by converting dehydroshikimate to protocatechuate. The qa cluster encodes 3 inducible enymes (qa-2, qa-3 and qa-4) catalyzing the first three reactions in the catabolism of quinic acid to protocatechuic acid (also known as 3,4-Dihydroxybenzoic acid). This Neurospora crassa (strain ATCC 24698 / 74-OR23-1A / CBS 708.71 / DSM 1257 / FGSC 987) protein is 3-dehydroshikimate dehydratase.